The primary structure comprises 813 residues: Cadherin-22 (813 aa).

Residues 1–33 (MRPRPEGALRAGAALSPVLLFLLLLPLLGHLWA) form the signal peptide. Topologically, residues 34–621 (ASTPAPSSLS…AFVMAASLSP (588 aa)) are extracellular. 5 Cadherin domains span residues 61 to 165 (WVWN…EPRF), 166 to 274 (LHGP…PPRF), 275 to 391 (PQKM…PPEF), 392 to 495 (RPPS…NPPE), and 496 to 613 (LATP…TTAF). N-linked (GlcNAc...) asparagine glycosylation occurs at Asn159. N-linked (GlcNAc...) asparagine glycans are attached at residues Asn463 and Asn609. The helical transmembrane segment at 622–642 (GALIALLVCVLILVVLALLIL) threads the bilayer. Over 643 to 813 (TLRRHHKSHL…HRGDDEAPAS (171 aa)) the chain is Cytoplasmic. Positions 696-726 (GGDPGGGAASPPQAASSSERHSLPRGPSSPE) are disordered.

In terms of tissue distribution, predominantly expressed in brain. Abundant in olfactory bulb, cerebrum, and cerebellum, less in pons, medulla, and spinal cord. Low expression in heart. No expression in lung, liver, spleen, kidney, testis, stomach, intestine, colon, and placenta.

Its subcellular location is the cell membrane. Its function is as follows. Cadherins are calcium-dependent cell adhesion proteins. They preferentially interact with themselves in a homophilic manner in connecting cells; cadherins may thus contribute to the sorting of heterogeneous cell types. PB-cadherins may have a role in the morphological organization of pituitary gland and brain tissues. In Mus musculus (Mouse), this protein is Cadherin-22 (Cdh22).